The chain runs to 288 residues: ATP phosphoribosyltransferase (288 aa).

Belongs to the ATP phosphoribosyltransferase family. Long subfamily. Mg(2+) is required as a cofactor.

The protein resides in the cytoplasm. It catalyses the reaction 1-(5-phospho-beta-D-ribosyl)-ATP + diphosphate = 5-phospho-alpha-D-ribose 1-diphosphate + ATP. It participates in amino-acid biosynthesis; L-histidine biosynthesis; L-histidine from 5-phospho-alpha-D-ribose 1-diphosphate: step 1/9. With respect to regulation, feedback inhibited by histidine. Functionally, catalyzes the condensation of ATP and 5-phosphoribose 1-diphosphate to form N'-(5'-phosphoribosyl)-ATP (PR-ATP). Has a crucial role in the pathway because the rate of histidine biosynthesis seems to be controlled primarily by regulation of HisG enzymatic activity. The protein is ATP phosphoribosyltransferase of Methanococcus maripaludis (strain C7 / ATCC BAA-1331).